Consider the following 487-residue polypeptide: Probable cytochrome P450 313a5 (487 aa).

Y223 carries the post-translational modification Phosphotyrosine. Position 433 (C433) interacts with heme.

Belongs to the cytochrome P450 family. Requires heme as cofactor.

It is found in the endoplasmic reticulum membrane. Its subcellular location is the microsome membrane. May be involved in the metabolism of insect hormones and in the breakdown of synthetic insecticides. This chain is Probable cytochrome P450 313a5 (Cyp313a5), found in Drosophila melanogaster (Fruit fly).